Here is a 122-residue protein sequence, read N- to C-terminus: uncharacterized protein (122 aa).

Positions 1-15 (MAEPGGRGDYHKDGR) are enriched in basic and acidic residues. The disordered stretch occupies residues 1–26 (MAEPGGRGDYHKDGRPPSLSRSPLFT).

This is an uncharacterized protein from Macaca fascicularis (Crab-eating macaque).